The sequence spans 89 residues: Small ribosomal subunit protein uS15 (89 aa).

This sequence belongs to the universal ribosomal protein uS15 family. As to quaternary structure, part of the 30S ribosomal subunit. Forms a bridge to the 50S subunit in the 70S ribosome, contacting the 23S rRNA.

In terms of biological role, one of the primary rRNA binding proteins, it binds directly to 16S rRNA where it helps nucleate assembly of the platform of the 30S subunit by binding and bridging several RNA helices of the 16S rRNA. Functionally, forms an intersubunit bridge (bridge B4) with the 23S rRNA of the 50S subunit in the ribosome. The protein is Small ribosomal subunit protein uS15 of Buchnera aphidicola subsp. Schizaphis graminum (strain Sg).